The primary structure comprises 294 residues: Beta-lactamase (294 aa).

Positions 1-30 are cleaved as a signal peptide; the sequence is MKHSSLRRSLLLAGITLPLVSFALPAWANA. Serine 75 (acyl-ester intermediate) is an active-site residue. Residue 239–241 coordinates substrate; it reads KTG.

Belongs to the class-A beta-lactamase family.

It carries out the reaction a beta-lactam + H2O = a substituted beta-amino acid. The protein is Beta-lactamase (blaA) of Yersinia enterocolitica.